Here is a 300-residue protein sequence, read N- to C-terminus: Formate dehydrogenase-O iron-sulfur subunit (300 aa).

The Cytoplasmic portion of the chain corresponds to 1-260 (MAYQSQDIIR…KFWKGIWKPL (260 aa)). 4Fe-4S ferredoxin-type domains are found at residues 30 to 60 (VAKL…DTVG), 91 to 123 (LEWL…QYAN), 124 to 153 (GIVD…LNPE), and 158 to 189 (YKCT…FGTK). Positions 39, 42, 45, 49, 100, 103, 108, 112, 133, 136, 139, 143, 160, 163, 175, and 179 each coordinate [4Fe-4S] cluster. Residues 261-279 (AAVGFAATFAASIFHYVGV) traverse the membrane as a helical segment. At 280 to 300 (GPNRADEEENNLHEEKDEERK) the chain is on the periplasmic side.

Formate dehydrogenase is a membrane-bound complex, formed by subunits alpha, beta and gamma. Requires [4Fe-4S] cluster as cofactor.

It localises to the cell membrane. Allows to use formate as major electron donor during aerobic respiration. The beta chain is an electron transfer unit containing 4 cysteine clusters involved in the formation of iron-sulfur centers. Electrons are transferred from the gamma chain to the molybdenum cofactor of the alpha subunit. The chain is Formate dehydrogenase-O iron-sulfur subunit (fdoH) from Escherichia coli (strain K12).